A 329-amino-acid chain; its full sequence is DNA-directed RNA polymerase subunit alpha (329 aa).

The alpha N-terminal domain (alpha-NTD) stretch occupies residues 1–231 (MSILSFQMPE…KHFMLFSDQT (231 aa)). The segment at 247–329 (EEFLHMRKLL…DTAKYKLDED (83 aa)) is alpha C-terminal domain (alpha-CTD).

This sequence belongs to the RNA polymerase alpha chain family. As to quaternary structure, homodimer. The RNAP catalytic core consists of 2 alpha, 1 beta, 1 beta' and 1 omega subunit. When a sigma factor is associated with the core the holoenzyme is formed, which can initiate transcription.

The enzyme catalyses RNA(n) + a ribonucleoside 5'-triphosphate = RNA(n+1) + diphosphate. Its function is as follows. DNA-dependent RNA polymerase catalyzes the transcription of DNA into RNA using the four ribonucleoside triphosphates as substrates. The protein is DNA-directed RNA polymerase subunit alpha of Cytophaga hutchinsonii (strain ATCC 33406 / DSM 1761 / CIP 103989 / NBRC 15051 / NCIMB 9469 / D465).